The following is a 447-amino-acid chain: Rab GDP dissociation inhibitor alpha (447 aa).

This sequence belongs to the Rab GDI family. As to quaternary structure, interacts with RHOH. Interacts with the non-phosphorylated forms of RAB1A, RAB3A, RAB5A, RAB5B, RAB5C, RAB8A, RAB8B, RAB10, RAB12, RAB35, and RAB43. In terms of tissue distribution, brain; predominant in neural and sensory tissues.

The protein resides in the cytoplasm. Its subcellular location is the golgi apparatus. The protein localises to the trans-Golgi network. In terms of biological role, regulates the GDP/GTP exchange reaction of most Rab proteins by inhibiting the dissociation of GDP from them, and the subsequent binding of GTP to them. Promotes the dissociation of GDP-bound Rab proteins from the membrane and inhibits their activation. Promotes the dissociation of RAB1A, RAB3A, RAB5A and RAB10 from membranes. In Homo sapiens (Human), this protein is Rab GDP dissociation inhibitor alpha (GDI1).